We begin with the raw amino-acid sequence, 42 residues long: Photosystem I reaction center subunit IX (42 aa).

A helical transmembrane segment spans residues 7–27 (YLSVAPVLSTLWFGALAGLLI).

It belongs to the PsaJ family.

It is found in the plastid. The protein localises to the chloroplast thylakoid membrane. Functionally, may help in the organization of the PsaE and PsaF subunits. The polypeptide is Photosystem I reaction center subunit IX (Agrostis stolonifera (Creeping bentgrass)).